Reading from the N-terminus, the 109-residue chain is Cell division protein ZapA (109 aa).

The stretch at 21–99 forms a coiled coil; the sequence is PEQRDALNQA…IEQALLEQGR (79 aa).

This sequence belongs to the ZapA family. Type 1 subfamily. In terms of assembly, homodimer. Interacts with FtsZ.

Its subcellular location is the cytoplasm. In terms of biological role, activator of cell division through the inhibition of FtsZ GTPase activity, therefore promoting FtsZ assembly into bundles of protofilaments necessary for the formation of the division Z ring. It is recruited early at mid-cell but it is not essential for cell division. This Klebsiella pneumoniae (strain 342) protein is Cell division protein ZapA.